The chain runs to 50 residues: F420-non-reducing hydrogenase vhu subunit U (50 aa).

2 residues coordinate Ni(2+): Sec27 and Cys30. Residue Sec27 is a non-standard amino acid, selenocysteine. A propeptide spans 34–50 (IIVKDEKGNKIIEVIKE) (removed in mature form).

It belongs to the [NiFe]/[NiFeSe] hydrogenase large subunit family. In terms of assembly, the F420-non-reducing hydrogenase vhu is composed of four subunits; VhuA, VhuD, VhuG and VhuU. Requires Ni(2+) as cofactor.

The protein is F420-non-reducing hydrogenase vhu subunit U (vhuU) of Methanocaldococcus jannaschii (strain ATCC 43067 / DSM 2661 / JAL-1 / JCM 10045 / NBRC 100440) (Methanococcus jannaschii).